Here is an 83-residue protein sequence, read N- to C-terminus: Probable calcium-binding protein CML28 (83 aa).

EF-hand domains are found at residues threonine 5 to valine 40 and glutamate 43 to leucine 75. Ca(2+) is bound by residues aspartate 18, asparagine 20, aspartate 22, lysine 24, glutamate 29, aspartate 53, aspartate 55, aspartate 57, tyrosine 59, and glutamate 64.

Potential calcium sensor. The protein is Probable calcium-binding protein CML28 (CML28) of Arabidopsis thaliana (Mouse-ear cress).